The primary structure comprises 654 residues: Pentatricopeptide repeat-containing protein At5g61400 (654 aa).

PPR repeat units lie at residues 37–71 (SSFS…RVSK), 74–104 (DLQS…LIER), 131–161 (SIGV…MKCS), 163–197 (DSKA…GLVP), 198–232 (DVHI…GIKP), 233–267 (NVYI…GVLP), 268–302 (NLYT…ELLP), 303–337 (NVVV…GVDP), 338–372 (NLYV…NLSP), 373–407 (DVFT…RIFP), 408–442 (SSAT…GVEP), 443–477 (NIIT…GIVP), 478–512 (DVVT…GIHP), 513–543 (NDHT…NNQQ), 548–582 (NHVG…GITP), and 583–617 (DICS…GILP).

The protein belongs to the PPR family. P subfamily.

This is Pentatricopeptide repeat-containing protein At5g61400 from Arabidopsis thaliana (Mouse-ear cress).